We begin with the raw amino-acid sequence, 231 residues long: Cytidylate kinase (231 aa).

Position 17 to 25 (17 to 25 (GPTASGKGT)) interacts with ATP.

This sequence belongs to the cytidylate kinase family. Type 1 subfamily.

It is found in the cytoplasm. It carries out the reaction CMP + ATP = CDP + ADP. The catalysed reaction is dCMP + ATP = dCDP + ADP. The polypeptide is Cytidylate kinase (Ralstonia pickettii (strain 12J)).